A 400-amino-acid polypeptide reads, in one-letter code: MSDKNRVALAFSGGLDTTVCVPLLEEEYGYDEVIGVTVDVGQPEAEFKEAEETAEALDLEHHVVDAKPEFAELCFDAVRANASYQGYPLGTALARPVIAEAILEVAKEEGCSGVAHGSTGKGNDQLRFEAVWRDSDLEVIAPVRELGLTRTFEQEYAEERGLPIEGGDEGKYSIDTNLWSRSIEGSELEEPGYVPPEDIYEWTTAPTAETLEVEVGFEDGYPVSLDGEKLEPVELIETLNDLAGDYGVGRTDIMEDRMLGLKVRENYEHPAATVLLNAHQALEDLVLTKEERAFKKQVDHEWSEKGYQGLVNAPLVDALEGFIDETQDRVTGTVTIRFEGGQARPVGRESPYAVYSAEAASFNTEDVTGGIEQSDATGVAKYHGFQERLANRVIDAADEE.

10–18 contributes to the ATP binding site; it reads AFSGGLDTT. L-citrulline is bound at residue tyrosine 87. Residue glycine 117 participates in ATP binding. Positions 119, 123, and 124 each coordinate L-aspartate. Asparagine 123 lines the L-citrulline pocket. L-citrulline is bound by residues arginine 127, serine 173, serine 182, glutamate 255, and tyrosine 267.

This sequence belongs to the argininosuccinate synthase family. Type 1 subfamily. In terms of assembly, homotetramer.

The protein resides in the cytoplasm. It catalyses the reaction L-citrulline + L-aspartate + ATP = 2-(N(omega)-L-arginino)succinate + AMP + diphosphate + H(+). Its pathway is amino-acid biosynthesis; L-arginine biosynthesis; L-arginine from L-ornithine and carbamoyl phosphate: step 2/3. The chain is Argininosuccinate synthase from Natronomonas pharaonis (strain ATCC 35678 / DSM 2160 / CIP 103997 / JCM 8858 / NBRC 14720 / NCIMB 2260 / Gabara) (Halobacterium pharaonis).